The sequence spans 248 residues: Probable S-methyl-5'-thioinosine phosphorylase (248 aa).

Phosphate contacts are provided by residues T12 and 54–55; that span reads RH. M187 contacts substrate. Phosphate is bound at residue T188. 211-213 contributes to the substrate binding site; sequence NWA.

This sequence belongs to the PNP/MTAP phosphorylase family. MTAP subfamily. In terms of assembly, homotrimer.

It carries out the reaction S-methyl-5'-thioinosine + phosphate = 5-(methylsulfanyl)-alpha-D-ribose 1-phosphate + hypoxanthine. The protein operates within purine metabolism; purine nucleoside salvage. In terms of biological role, catalyzes the reversible phosphorylation of S-methyl-5'-thioinosine (MTI) to hypoxanthine and 5-methylthioribose-1-phosphate. Involved in the breakdown of S-methyl-5'-thioadenosine (MTA), a major by-product of polyamine biosynthesis. Catabolism of (MTA) occurs via deamination to MTI and phosphorolysis to hypoxanthine. This chain is Probable S-methyl-5'-thioinosine phosphorylase, found in Xylella fastidiosa (strain Temecula1 / ATCC 700964).